The primary structure comprises 44 residues: Protein PsbN (44 aa).

A helical transmembrane segment spans residues 6–26 (FFFTLFLWFFLLSITIYSIYI).

It belongs to the PsbN family.

The protein resides in the plastid. The protein localises to the chloroplast thylakoid membrane. Functionally, may play a role in photosystem I and II biogenesis. This is Protein PsbN from Oedogonium cardiacum (Filamentous green alga).